The following is a 111-amino-acid chain: BET1-like protein (111 aa).

At 1–86 (MADWARAQSP…MARSGRDNRK (86 aa)) the chain is on the cytoplasmic side. 2 positions are modified to phosphoserine: Ser9 and Ser37. The region spanning 15–77 (EILDRENKRM…TGSVKRFSTM (63 aa)) is the t-SNARE coiled-coil homology domain. Residues 87–107 (LLCGVAVGLIVAFFILSYLLS) traverse the membrane as a helical; Anchor for type IV membrane protein segment. Topologically, residues 108 to 111 (RART) are lumenal.

Component of a SNARE complex consisting of STX5, YKT6, GOSR1 and BET1L. Interacts with STX5.

Its subcellular location is the golgi apparatus membrane. The protein localises to the golgi apparatus. It localises to the trans-Golgi network membrane. Functionally, vesicle SNARE required for targeting and fusion of retrograde transport vesicles with the Golgi complex. Required for the integrity of the Golgi complex. The sequence is that of BET1-like protein from Bos taurus (Bovine).